Here is a 547-residue protein sequence, read N- to C-terminus: Chaperonin GroEL (547 aa).

Residues 29–32 (TLGP), 86–90 (DGTTT), G413, and D498 contribute to the ATP site.

The protein belongs to the chaperonin (HSP60) family. In terms of assembly, forms a cylinder of 14 subunits composed of two heptameric rings stacked back-to-back. Interacts with the co-chaperonin GroES.

The protein localises to the cytoplasm. The enzyme catalyses ATP + H2O + a folded polypeptide = ADP + phosphate + an unfolded polypeptide.. In terms of biological role, together with its co-chaperonin GroES, plays an essential role in assisting protein folding. The GroEL-GroES system forms a nano-cage that allows encapsulation of the non-native substrate proteins and provides a physical environment optimized to promote and accelerate protein folding. In Herpetosiphon aurantiacus (strain ATCC 23779 / DSM 785 / 114-95), this protein is Chaperonin GroEL.